The sequence spans 41 residues: Cytochrome b559 subunit beta (41 aa).

A helical transmembrane segment spans residues 16–32 (WLAVHALAIPTVFFLGS). H20 provides a ligand contact to heme.

It belongs to the PsbE/PsbF family. As to quaternary structure, heterodimer of an alpha subunit and a beta subunit. PSII is composed of 1 copy each of membrane proteins PsbA, PsbB, PsbC, PsbD, PsbE, PsbF, PsbH, PsbI, PsbJ, PsbK, PsbL, PsbM, PsbT, PsbY, PsbZ, Psb30/Ycf12, at least 3 peripheral proteins of the oxygen-evolving complex and a large number of cofactors. It forms dimeric complexes. Heme b serves as cofactor.

The protein localises to the plastid. The protein resides in the chloroplast thylakoid membrane. This b-type cytochrome is tightly associated with the reaction center of photosystem II (PSII). PSII is a light-driven water:plastoquinone oxidoreductase that uses light energy to abstract electrons from H(2)O, generating O(2) and a proton gradient subsequently used for ATP formation. It consists of a core antenna complex that captures photons, and an electron transfer chain that converts photonic excitation into a charge separation. In Euglena gracilis, this protein is Cytochrome b559 subunit beta.